We begin with the raw amino-acid sequence, 566 residues long: Putative ankyrin repeat protein RF_0987 (566 aa).

Disordered stretches follow at residues 61 to 118, 276 to 314, and 355 to 392; these read KKKN…HENS, PPVM…SAEI, and VNNN…SEST. A compositionally biased stretch (basic and acidic residues) spans 78-92; the sequence is NQEEPKLASQEHTEA. Positions 101 to 112 are enriched in polar residues; sequence TGNTALPSVTAS. Residues 296-308 show a composition bias toward low complexity; sequence TPVTTPSKVVPTT. Residues 365-378 are compositionally biased toward polar residues; it reads EKSPPVSSSNVTIQ. ANK repeat units follow at residues 506 to 535 and 539 to 566; these read SGET…KIST and ECQY…KGYQ.

The protein is Putative ankyrin repeat protein RF_0987 of Rickettsia felis (strain ATCC VR-1525 / URRWXCal2) (Rickettsia azadi).